A 512-amino-acid chain; its full sequence is Putative UDP-glucuronosyltransferase ugt-55 (512 aa).

An N-terminal signal peptide occupies residues 1-22; it reads MQLLTLPTLIFIFLNYGTPCLS. A helical membrane pass occupies residues 487-507; sequence ILLYLDSIAMFTLTLLTMILI.

The protein belongs to the UDP-glycosyltransferase family.

It is found in the membrane. The catalysed reaction is glucuronate acceptor + UDP-alpha-D-glucuronate = acceptor beta-D-glucuronoside + UDP + H(+). The chain is Putative UDP-glucuronosyltransferase ugt-55 (ugt-55) from Caenorhabditis elegans.